The primary structure comprises 134 residues: Profilin-5 (134 aa).

A disulfide bridge connects residues Cys13 and Cys118. An Involved in PIP2 interaction motif is present at residues Ala84–Thr100. A Phosphothreonine modification is found at Thr114.

Belongs to the profilin family. In terms of assembly, occurs in many kinds of cells as a complex with monomeric actin in a 1:1 ratio. Post-translationally, phosphorylated by MAP kinases.

The protein localises to the cytoplasm. The protein resides in the cytoskeleton. Binds to actin and affects the structure of the cytoskeleton. At high concentrations, profilin prevents the polymerization of actin, whereas it enhances it at low concentrations. This is Profilin-5 from Olea europaea (Common olive).